The following is a 151-amino-acid chain: Internal scaffolding protein VP3 (151 aa).

Positions 120-151 (VETPQQAPQSTTNQTTTKPAPASGEPTPVPTP) are disordered. Polar residues predominate over residues 122 to 137 (TPQQAPQSTTNQTTTK).

The protein belongs to the microvidae B protein family.

The protein localises to the host cytoplasm. Functionally, participates in the assembly of the viral procapsid in the cytoplasm. Internal scaffolding protein VP3 is released from the procapsid upon genome packaging, possibly through affinity displacement by the protein VP8, or by proteolysis. This Bdellovibrio bacteriovorus (Bacteriophage phiMH2K) protein is Internal scaffolding protein VP3.